Here is an 831-residue protein sequence, read N- to C-terminus: Phenylalanine--tRNA ligase beta subunit (831 aa).

One can recognise a tRNA-binding domain in the interval 42 to 157; the sequence is ADISGPIVVG…GFAEPGTKAD (116 aa). The B5 domain maps to 408–483; the sequence is VPREPIVVRA…RNEGYENIPA (76 aa). 4 residues coordinate Mg(2+): Asp-461, Asp-467, Glu-470, and Glu-471. The 94-residue stretch at 737-830 folds into the FDX-ACB domain; that stretch reads STYPVATQDV…AAERTGAVLR (94 aa).

Belongs to the phenylalanyl-tRNA synthetase beta subunit family. Type 1 subfamily. In terms of assembly, tetramer of two alpha and two beta subunits. Mg(2+) is required as a cofactor.

Its subcellular location is the cytoplasm. It carries out the reaction tRNA(Phe) + L-phenylalanine + ATP = L-phenylalanyl-tRNA(Phe) + AMP + diphosphate + H(+). The polypeptide is Phenylalanine--tRNA ligase beta subunit (Thermobifida fusca (strain YX)).